A 373-amino-acid chain; its full sequence is MSEVKSRKKPGPKVAAPEPEKRSDGRKNPEARGDAGWADPRTGLSLLSLAMTLGLAWLVFQQSEKFAKVEKQYRLLQTESSEFQGLQSKISLISSKLESTENTLQEATSSISLMTQFEQEVSGLQRSIRDIETSEEMLTQKMQNLNEKFQNITDFWKRTLAEMIDDTAVFKSEVKDTHSEVTLKINSADQEIKSLTERLKDLEDSTLRNIRTVSRQEEEDLLRVEAQLSSDTKAVKKLEEEQHTLLARDEDLTNKLSSYEPKVEECKAHFPTIENAVHSVLRVSQDLIGTERKMEELTMQMFNMEDDMLRAVSEIMEMQKTLEGIQYDNSLLKMQNELVVLKGKVHDFIAYSSAREKGTLGEYSLGNKGTDEY.

The span at 1–11 shows a compositional bias: basic residues; that stretch reads MSEVKSRKKPG. A disordered region spans residues 1-38; sequence MSEVKSRKKPGPKVAAPEPEKRSDGRKNPEARGDAGWA. Residues 18-33 show a composition bias toward basic and acidic residues; it reads EPEKRSDGRKNPEARG. Residues 43–59 form a helical membrane-spanning segment; it reads GLSLLSLAMTLGLAWLV. 2 coiled-coil regions span residues 86–257 and 285–324; these read LQSK…NKLS and QDLIGTERKMEELTMQMFNMEDDMLRAVSEIMEMQKTLEG. N-linked (GlcNAc...) asparagine glycosylation is present at asparagine 151.

In terms of processing, N-glycosylated at Asn-151.

Its subcellular location is the endoplasmic reticulum membrane. Functionally, target of p53/TP53 with pro-apoptotic function. This Mus musculus (Mouse) protein is Inhibitor of nuclear factor kappa-B kinase-interacting protein (Ikbip).